The sequence spans 261 residues: tRNA pseudouridine synthase A (261 aa).

Asp51 (nucleophile) is an active-site residue. Tyr109 contacts substrate.

It belongs to the tRNA pseudouridine synthase TruA family. Homodimer.

The enzyme catalyses uridine(38/39/40) in tRNA = pseudouridine(38/39/40) in tRNA. In terms of biological role, formation of pseudouridine at positions 38, 39 and 40 in the anticodon stem and loop of transfer RNAs. The chain is tRNA pseudouridine synthase A from Shewanella woodyi (strain ATCC 51908 / MS32).